Here is a 721-residue protein sequence, read N- to C-terminus: MAEKFESLMNIHGFDLGSRYMDLKPLGCGGNGLVFSAVDNDCDKRVAIKKIVLTDPQSVKHALREIKIIRRLDHDNIVKVFEILGPSGSQLTDDVGSLTELNSVYIVQEYMETDLANVLEQGPLLEEHARLFMYQLLRGLKYIHSANVLHRDLKPANLFINTEDLVLKIGDFGLARIMDPHYSHKGHLSEGLVTKWYRSPRLLLSPNNYTKAIDMWAAGCIFAEMLTGKTLFAGAHELEQMQLILESIPVVHEEDRQELLSVIPVYIRNDMTEPHKPLTQLLPGISREALDFLEQILTFSPMDRLTAEEALSHPYMSIYSFPMDEPISSHPFHIEDEVDDILLMDETHSHIYNWERYHDCQFSEHDWPVHNNFDIDEVQLDPRALSDVTDEEEVQVDPRKYLDGDREKYLEDPAFDTNYSTEPCWQYSDHHENKYCDLECSHTCNYKTRSSSYLDNLVWRESEVNHYYEPKLIIDLSNWKEQSKEKSDKKGKSKCERNGLVKAQIALEEASQQLAGKEREKNQGFDFDSFIAGTIQLSSQHEPTDVVDKLNDLNSSVSQLELKSLISKSVSQEKQEKGMANLAQLEALYQSSWDSQFVSGGEDCFFINQFCEVRKDEQVEKENTYTSYLDKFFSRKEDTEMLETEPVEDGKLGERGHEEGFLNNSGEFLFNKQLESIGIPQFHSPVGSPLKSIQATLTPSAMKSSPQIPHQTYSSILKHLN.

Met-1 participates in a covalent cross-link: Peptide (Met-Gly) (interchain with G-Cter in ubiquitin). A Protein kinase domain is found at Tyr-20–Met-316. Residues Leu-26–Val-34 and Lys-49 contribute to the ATP site. The active-site Proton acceptor is the Asp-152. Phosphoserine; by PAK1, PAK2 and PAK3 is present on Ser-189. The SEG motif motif lies at Ser-189–Gly-191. An FRIEDE motif motif is present at residues Phe-332–Glu-337. A phosphoserine mark is found at Ser-386, Ser-452, Ser-556, Ser-558, Ser-665, and Ser-684. Residues Ala-701–Ser-715 show a composition bias toward polar residues. Positions Ala-701 to Asn-721 are disordered.

The protein belongs to the protein kinase superfamily. CMGC Ser/Thr protein kinase family. MAP kinase subfamily. In terms of assembly, heterodimer with ERK4/MAPK4. Interacts with (via FRIEDE motif) MAPKAPK5. Interacts with UBE3A; this interaction may be indirect and mediated by HERC2, possibly via HERC2 interaction with NEURL4. It depends on Mg(2+) as a cofactor. In terms of processing, phosphorylated at Ser-189 by PAK1, PAK2 and PAK3 resulting in catalytic activation. Phosphorylated by MAPKAPK5 at other sites. Ubiquitination at Met-1 leads to degradation by the proteasome pathway. Highest expression in the skeletal muscle, followed by the brain. Also found in heart, placenta, lung, liver, pancreas, kidney and skin fibroblasts.

The protein resides in the cytoplasm. It localises to the nucleus. The catalysed reaction is L-seryl-[protein] + ATP = O-phospho-L-seryl-[protein] + ADP + H(+). The enzyme catalyses L-threonyl-[protein] + ATP = O-phospho-L-threonyl-[protein] + ADP + H(+). With respect to regulation, activated by phosphorylation at Ser-189. Functionally, atypical MAPK protein. Phosphorylates microtubule-associated protein 2 (MAP2) and MAPKAPK5. The precise role of the complex formed with MAPKAPK5 is still unclear, but the complex follows a complex set of phosphorylation events: upon interaction with atypical MAPKAPK5, ERK3/MAPK6 is phosphorylated at Ser-189 and then mediates phosphorylation and activation of MAPKAPK5, which in turn phosphorylates ERK3/MAPK6. May promote entry in the cell cycle. The chain is Mitogen-activated protein kinase 6 (MAPK6) from Homo sapiens (Human).